The following is a 437-amino-acid chain: tRNA pseudouridine synthase Pus10 (437 aa).

The THUMP domain occupies Val76–Ser198. Asp253 serves as the catalytic Nucleophile. The substrate site is built by Tyr321 and Tyr394.

It belongs to the pseudouridine synthase Pus10 family.

The catalysed reaction is uridine(54) in tRNA = pseudouridine(54) in tRNA. It catalyses the reaction uridine(55) in tRNA = pseudouridine(55) in tRNA. In terms of biological role, responsible for synthesis of pseudouridine from uracil-54 and uracil-55 in the psi GC loop of transfer RNAs. In Aeropyrum pernix (strain ATCC 700893 / DSM 11879 / JCM 9820 / NBRC 100138 / K1), this protein is tRNA pseudouridine synthase Pus10.